Here is a 431-residue protein sequence, read N- to C-terminus: MRTVVWQSLSEAQQESILERPAITEGANITAAVAQVIAKVRSEGDAALFELTEKFDRVKPASLRVSREEMDAAAARLSETMKQALEQAYNNISKFHKAQKAQPIKVETMPGVVCEQVTRPINKVGLYIPGGSAPLPSTVLMLGVPAQIAGCRKVVLCSPPPIADEILYVAKLCNIDEVYNLGGGQAIAAMAYGTETVTKVDKIFGPGNAYVTEAKRQVSNDFRGAAIDMPAGPSEVLVIADETADANFIAADLLSQAEHGPDSQVVLVTPSPVLADQVTDAVQKQLKVLSRASIAEKALASSLIIIAESLTQAVSISNYYGPEHLIVQTRNPRELVPLLDNAGSIFLGDWSPESVGDYASGTNHVLPTYGYTRTYSSLGLADFSKRMTVQELTADGLQLLAPTVVTMAEAEGLDAHKRAVTIRVEKLQKAQ.

Residues tyrosine 127, glutamine 185, and asparagine 208 each coordinate NAD(+). Positions 234, 256, and 259 each coordinate substrate. Residues glutamine 256 and histidine 259 each coordinate Zn(2+). Residues glutamate 323 and histidine 324 each act as proton acceptor in the active site. 4 residues coordinate substrate: histidine 324, aspartate 357, glutamate 411, and histidine 416. Aspartate 357 lines the Zn(2+) pocket. Histidine 416 provides a ligand contact to Zn(2+).

It belongs to the histidinol dehydrogenase family. Requires Zn(2+) as cofactor.

The enzyme catalyses L-histidinol + 2 NAD(+) + H2O = L-histidine + 2 NADH + 3 H(+). Its pathway is amino-acid biosynthesis; L-histidine biosynthesis; L-histidine from 5-phospho-alpha-D-ribose 1-diphosphate: step 9/9. Its function is as follows. Catalyzes the sequential NAD-dependent oxidations of L-histidinol to L-histidinaldehyde and then to L-histidine. In Vibrio cholerae serotype O1 (strain ATCC 39315 / El Tor Inaba N16961), this protein is Histidinol dehydrogenase.